The chain runs to 711 residues: L-type lectin-domain containing receptor kinase VIII.2 (711 aa).

The first 30 residues, 1-30, serve as a signal peptide directing secretion; the sequence is MLKLPPRFFSVYSTLIHILASFLCSSDVRG. The Extracellular segment spans residues 31–315; that stretch reads DFPATRFDLG…NKLCKKSPAA (285 aa). The legume-lectin like stretch occupies residues 35-260; that stretch reads TRFDLGTLTL…IHSVDWWSFS (226 aa). A glycan (N-linked (GlcNAc...) asparagine) is linked at asparagine 57. The tract at residues 265–306 is disordered; the sequence is ESSESPPPMPNSPPPSSPSSSITPSLSTVRRKTADPSSSCRN. The span at 269-281 shows a compositional bias: pro residues; sequence SPPPMPNSPPPSS. The segment covering 282–291 has biased composition (low complexity); sequence PSSSITPSLS. Residues 316–336 traverse the membrane as a helical segment; it reads VAGVVTAGAFFLALFAGVIIW. At 337–711 the chain is on the cytoplasmic side; sequence VYSKKIKYTR…IFIVGKDRSV (375 aa). The Protein kinase domain occupies 374-656; sequence FSSSRVIGNG…LVGEADVPEV (283 aa). ATP-binding positions include 380 to 388 and lysine 403; that span reads IGNGAFGTV. The active-site Proton acceptor is aspartate 497.

The protein in the C-terminal section; belongs to the protein kinase superfamily. Ser/Thr protein kinase family. It in the N-terminal section; belongs to the leguminous lectin family.

The protein resides in the cell membrane. The catalysed reaction is L-seryl-[protein] + ATP = O-phospho-L-seryl-[protein] + ADP + H(+). It carries out the reaction L-threonyl-[protein] + ATP = O-phospho-L-threonyl-[protein] + ADP + H(+). Its function is as follows. Involved in resistance response to the pathogenic oomycetes Phytophthora infestans and Phytophthora capsici. The sequence is that of L-type lectin-domain containing receptor kinase VIII.2 from Arabidopsis thaliana (Mouse-ear cress).